An 887-amino-acid chain; its full sequence is Alanine--tRNA ligase (887 aa).

Zn(2+) is bound by residues His-575, His-579, Cys-677, and His-681.

Belongs to the class-II aminoacyl-tRNA synthetase family. Zn(2+) is required as a cofactor.

The protein resides in the cytoplasm. It catalyses the reaction tRNA(Ala) + L-alanine + ATP = L-alanyl-tRNA(Ala) + AMP + diphosphate. In terms of biological role, catalyzes the attachment of alanine to tRNA(Ala) in a two-step reaction: alanine is first activated by ATP to form Ala-AMP and then transferred to the acceptor end of tRNA(Ala). Also edits incorrectly charged Ser-tRNA(Ala) and Gly-tRNA(Ala) via its editing domain. This is Alanine--tRNA ligase from Geobacillus kaustophilus (strain HTA426).